The primary structure comprises 1000 residues: UPF0182 protein SCO5204 (1000 aa).

The next 7 membrane-spanning stretches (helical) occupy residues 26-48 (LLLT…GFWT), 70-92 (IGLF…WLAH), 121-143 (WLLL…GQWR), 177-199 (FLLG…THYL), 220-237 (LSVL…AYWL), 267-289 (LPAK…ATLW), and 296-318 (PVIG…PALV). 2 disordered regions span residues 884–908 (AETE…NPTV) and 943–1000 (EALQ…ADTG). The segment covering 888–897 (QPPDEGDDTT) has biased composition (acidic residues). Composition is skewed to basic and acidic residues over residues 943–953 (EALQRAEDAQA) and 963–984 (NGDD…DKAG).

The protein belongs to the UPF0182 family.

The protein localises to the cell membrane. The chain is UPF0182 protein SCO5204 from Streptomyces coelicolor (strain ATCC BAA-471 / A3(2) / M145).